A 480-amino-acid chain; its full sequence is Probable glycosyltransferase 2 (480 aa).

Residues 1–21 (MGQEGMGYNNGKGGGGGGGGL) show a composition bias toward gly residues. Residues 1–45 (MGQEGMGYNNGKGGGGGGGGLPMTAPRPRGASPLSSHGHHHRSRK) form a disordered region. Residues 1 to 49 (MGQEGMGYNNGKGGGGGGGGLPMTAPRPRGASPLSSHGHHHRSRKIHRT) lie on the Cytoplasmic side of the membrane. Residues 50 to 72 (FNNVKITVLCGLVTILVLRGTIG) form a helical; Signal-anchor for type II membrane protein membrane-spanning segment. Topologically, residues 73–480 (LNLSLPNQPT…DVKAKISTTS (408 aa)) are lumenal. Residues asparagine 74, asparagine 124, asparagine 129, and asparagine 458 are each glycosylated (N-linked (GlcNAc...) asparagine).

The protein belongs to the glycosyltransferase 34 family.

The protein localises to the golgi apparatus membrane. Functionally, probable glycosyltransferase that may be involved in the biosynthesis of xyloglucan. In Oryza sativa subsp. indica (Rice), this protein is Probable glycosyltransferase 2.